The sequence spans 280 residues: Fructose-1,6-bisphosphatase class 1 (280 aa).

Residues Glu64, Asp83, Leu85, and Asp86 each coordinate Mg(2+). Residues 86-89, Tyr189, and Lys220 contribute to the substrate site; that span reads DGSS. A Mg(2+)-binding site is contributed by Glu226.

Belongs to the FBPase class 1 family. Homotetramer. The cofactor is Mg(2+).

It is found in the cytoplasm. It carries out the reaction beta-D-fructose 1,6-bisphosphate + H2O = beta-D-fructose 6-phosphate + phosphate. The protein operates within carbohydrate biosynthesis; gluconeogenesis. This Campylobacter jejuni subsp. doylei (strain ATCC BAA-1458 / RM4099 / 269.97) protein is Fructose-1,6-bisphosphatase class 1.